A 205-amino-acid polypeptide reads, in one-letter code: Small ribosomal subunit protein uS4 (205 aa).

A disordered region spans residues 26–47; that stretch reads PVNKREYGPGQHGQRRKQKPSD. The S4 RNA-binding domain maps to 94–154; sequence RRLDAVVYRL…EKSKHLAIVL (61 aa).

Belongs to the universal ribosomal protein uS4 family. Part of the 30S ribosomal subunit. Contacts protein S5. The interaction surface between S4 and S5 is involved in control of translational fidelity.

Its function is as follows. One of the primary rRNA binding proteins, it binds directly to 16S rRNA where it nucleates assembly of the body of the 30S subunit. In terms of biological role, with S5 and S12 plays an important role in translational accuracy. The chain is Small ribosomal subunit protein uS4 from Gluconacetobacter diazotrophicus (strain ATCC 49037 / DSM 5601 / CCUG 37298 / CIP 103539 / LMG 7603 / PAl5).